Here is a 751-residue protein sequence, read N- to C-terminus: WD repeat-containing protein 91 (751 aa).

Residues 188-212 (IQEENESLRHKLFALQAESSRMKKE) are a coiled coil. The disordered stretch occupies residues 264–395 (LSQSKKGPAR…ASSTESVGVR (132 aa)). Residues 278–287 (SGASPTQTGS) are compositionally biased toward polar residues. A compositionally biased stretch (basic and acidic residues) spans 334 to 346 (RLQEHGKERRELL). Residues 377–391 (QAETSTKMPASSTES) show a composition bias toward polar residues. 7 WD repeats span residues 410–449 (EHHS…QTKA), 452–492 (ISKS…NLCE), 497–559 (EDMP…QQLQ), 564–603 (PEPI…CAMS), 606–645 (AHDG…LKIS), 668–706 (VQFP…KVLE), and 713–751 (GHRA…AQKS).

This sequence belongs to the WD repeat WDR91 family.

The protein localises to the early endosome membrane. It localises to the late endosome membrane. Its function is as follows. Functions as a negative regulator of the PI3 kinase/PI3K activity associated with endosomal membranes. By modifying the phosphatidylinositol 3-phosphate/PtdInsP3 content of endosomal membranes may regulate endosome fusion, recycling, sorting and early to late endosome transport. The sequence is that of WD repeat-containing protein 91 from Gallus gallus (Chicken).